Reading from the N-terminus, the 1835-residue chain is Protein TIC 214 (1835 aa).

Transmembrane regions (helical) follow at residues valine 25–leucine 45, phenylalanine 64–leucine 84, proline 87–histidine 107, leucine 124–leucine 144, valine 172–isoleucine 192, and isoleucine 221–isoleucine 241. Residues leucine 246 to serine 258 show a composition bias toward basic and acidic residues. Disordered stretches follow at residues leucine 246–glutamine 304, glutamate 735–glutamate 759, and asparagine 1535–serine 1578. Acidic residues predominate over residues alanine 259 to threonine 268. Positions proline 1553–isoleucine 1569 are enriched in basic and acidic residues.

It belongs to the TIC214 family. As to quaternary structure, part of the Tic complex.

The protein resides in the plastid. It is found in the chloroplast inner membrane. Involved in protein precursor import into chloroplasts. May be part of an intermediate translocation complex acting as a protein-conducting channel at the inner envelope. The chain is Protein TIC 214 from Liriodendron tulipifera (Tuliptree).